Reading from the N-terminus, the 247-residue chain is Particulate methane monooxygenase beta subunit (247 aa).

6 helical membrane-spanning segments follow: residues 23 to 43 (WMALFVVFFVIVGSYHIHAML), 59 to 79 (LWVTVTPIVLVTFPAAVQSYL), 86 to 106 (PWGATVCVLGLLLGEWINRYF), 111 to 131 (WTYFPINFVFPASLVPGAIIL), 145 to 165 (AIVGAMGWGLIFYPGNWPIIA), and 215 to 235 (VSAFFSAFMSILIYFMWHFIG).

M.capsulatus has two forms of methane monooxygenase, a soluble (sMMO) and a membrane-bound (particulate) type (pMMO). The particulate type is a nonamer composed of three alpha:beta:gamma heterotrimeric protomers assembled into a cylindrical structure; the beta and gamma subunits comprise the bulk of the membrane-spanning regions and the soluble regions are derived primarily from alpha subunits which form two antiparallel beta-barrel-like structures each. This assembly, also called pMMO hydroxylase (pMMO-H), is proposed to associate with methanol dehydrogenase (MDH), also designated as pMMO-R, to form the pMMO-C complex which seems to have greater methane monooxygenase activity.

It localises to the membrane. The catalysed reaction is methane + a quinol + O2 = methanol + a quinone + H2O. In terms of biological role, non-catalytic subunit of the methane monooxygenase that is responsible for the initial oxygenation of methane to methanol in methanotrophs. At least in vitro, specific quinols can replace NADH as reductants. The polypeptide is Particulate methane monooxygenase beta subunit (pmoA1) (Methylococcus capsulatus (strain ATCC 33009 / NCIMB 11132 / Bath)).